Here is a 185-residue protein sequence, read N- to C-terminus: Elongation factor P (185 aa).

This sequence belongs to the elongation factor P family.

It is found in the cytoplasm. It participates in protein biosynthesis; polypeptide chain elongation. Functionally, involved in peptide bond synthesis. Stimulates efficient translation and peptide-bond synthesis on native or reconstituted 70S ribosomes in vitro. Probably functions indirectly by altering the affinity of the ribosome for aminoacyl-tRNA, thus increasing their reactivity as acceptors for peptidyl transferase. The sequence is that of Elongation factor P from Thermosynechococcus vestitus (strain NIES-2133 / IAM M-273 / BP-1).